Here is a 522-residue protein sequence, read N- to C-terminus: Echinocystic acid 23-monooxygenase (522 aa).

Residues 4–24 (LPYIATSIACIVILRWALNMM) traverse the membrane as a helical; Signal-anchor for type II membrane protein segment. Asn190 carries N-linked (GlcNAc...) asparagine glycosylation. Cys470 is a binding site for heme.

It belongs to the cytochrome P450 family. The cofactor is heme. In terms of tissue distribution, mainly expressed in flowers and flower buds, to a lesser extent in young leaves and, at low levels, in old leaves, stems and roots.

The protein resides in the membrane. It participates in secondary metabolite biosynthesis; terpenoid biosynthesis. Its function is as follows. Component of the oleanane-type triterpene saponins (e.g. saponarioside A and saponarioside B) biosynthetic pathway, leading to the production of natural products with detergent properties used as traditional sources of soap. An oxidoreductase that facilitates the oxidation of the methyl group to a carboxyl group at the C-23 position of echinocystic acid, resulting in the formation of quillaic acid (QA). The polypeptide is Echinocystic acid 23-monooxygenase (Saponaria officinalis (Common soapwort)).